A 166-amino-acid polypeptide reads, in one-letter code: Heme-degrading monooxygenase HmoB (166 aa).

Asparagine 33 is a binding site for Fe cation. An ABM domain is found at phenylalanine 66–phenylalanine 153. A heme-binding site is contributed by histidine 138.

Belongs to the antibiotic biosynthesis monooxygenase family. In terms of assembly, homodimer.

Its subcellular location is the cytoplasm. The catalysed reaction is heme b + 3 reduced [NADPH--hemoprotein reductase] + 3 O2 = biliverdin IXalpha + CO + Fe(2+) + 3 oxidized [NADPH--hemoprotein reductase] + 3 H2O + H(+). Functionally, catalyzes the oxidative degradation of the heme macrocyclic porphyrin ring in the presence of a suitable electron donor such as ascorbate or NADPH--cytochrome P450 reductase, with subsequent release of free iron. The sequence is that of Heme-degrading monooxygenase HmoB (hmoB) from Bacillus subtilis (strain 168).